Reading from the N-terminus, the 468-residue chain is Probable Xaa-Pro aminopeptidase PEPP (468 aa).

Residues aspartate 264, aspartate 275, glutamate 398, and glutamate 438 each coordinate Mn(2+).

The protein belongs to the peptidase M24B family. It depends on Mn(2+) as a cofactor.

It carries out the reaction Release of any N-terminal amino acid, including proline, that is linked to proline, even from a dipeptide or tripeptide.. Functionally, catalyzes the removal of a penultimate prolyl residue from the N-termini of peptides. This chain is Probable Xaa-Pro aminopeptidase PEPP (PEPP), found in Ajellomyces dermatitidis (strain ER-3 / ATCC MYA-2586) (Blastomyces dermatitidis).